We begin with the raw amino-acid sequence, 268 residues long: Tryptophan synthase alpha chain (268 aa).

Active-site proton acceptor residues include E49 and D60.

This sequence belongs to the TrpA family. Tetramer of two alpha and two beta chains.

It catalyses the reaction (1S,2R)-1-C-(indol-3-yl)glycerol 3-phosphate + L-serine = D-glyceraldehyde 3-phosphate + L-tryptophan + H2O. Its pathway is amino-acid biosynthesis; L-tryptophan biosynthesis; L-tryptophan from chorismate: step 5/5. Its function is as follows. The alpha subunit is responsible for the aldol cleavage of indoleglycerol phosphate to indole and glyceraldehyde 3-phosphate. The protein is Tryptophan synthase alpha chain of Pseudomonas aeruginosa (strain LESB58).